The chain runs to 348 residues: Alternative squalene epoxidase (348 aa).

Positions 1–10 (MLVDRVENNE) are enriched in basic and acidic residues. The interval 1–26 (MLVDRVENNEKQQQQMASSSDAMSDS) is disordered. Positions 12 to 26 (QQQQMASSSDAMSDS) are enriched in low complexity. 3 helical membrane-spanning segments follow: residues 55–75 (AIAWSGALVWPLMLTVPLLLS), 105–125 (LGLVLGILAVAVGQVFVWIFF), and 153–173 (GLLTHIGQPEGFVLLIGYLAI). Residues 197–332 (FMCLVLQDGI…FMWFDQLGGT (136 aa)) enclose the Fatty acid hydroxylase domain. The Histidine box-1 motif lies at 211 to 215 (HVLEH). A Histidine box-2 motif is present at residues 226 to 230 (HKPHH). Transmembrane regions (helical) follow at residues 243–263 (GSLMDTFCMIIIPLFVTANLV) and 277–297 (SYACWLTLIHSEYVFPWDGIF). The Histidine box-3 motif lies at 308–312 (HHVHH).

The protein belongs to the sterol desaturase family. As to quaternary structure, interacts with cytochrome b5/PHATRDRAFT_30770. It depends on Fe cation as a cofactor.

It localises to the endoplasmic reticulum membrane. The enzyme catalyses squalene + 2 Fe(II)-[cytochrome b5] + O2 + 2 H(+) = (S)-2,3-epoxysqualene + 2 Fe(III)-[cytochrome b5] + H2O. It functions in the pathway terpene metabolism; lanosterol biosynthesis; lanosterol from farnesyl diphosphate. With respect to regulation, the activity of this enzyme is not inhibited by terbinafine, an established inhibitor of the conventional flavoprotein squalene epoxidase. Functionally, catalyzes the stereospecific epoxidation of squalene at the terminal double bond to form (S)-2,3-epoxysqualene, the first oxygenation step in sterol biosynthesis. The chain is Alternative squalene epoxidase from Phaeodactylum tricornutum (strain CCAP 1055/1).